A 121-amino-acid polypeptide reads, in one-letter code: Neuromedin-B (121 aa).

Residues 1-24 (MTRQAGSSWLLRGLLLFALFASGV) form the signal peptide. Methionine 56 bears the Methionine amide mark. Positions 60–121 (SLEPPSLSLV…RRLLEPLLQK (62 aa)) are excised as a propeptide.

This sequence belongs to the bombesin/neuromedin-B/ranatensin family. In terms of tissue distribution, in the hindbrain, expressed in the medulla surrounding the lateral half of the facial nucleus. Also expressed in the olfactory bulb and hippocampus. Detected in a subset of neurons distributed throughout the retrotrapezoid nucleus/parafacial respiratory group (RTN/pFRG). Within the RTN/pFRG, expressed in neuronal subpopulations distinct from those expressing Grp. Expressed in lung.

The protein localises to the secreted. It localises to the cell projection. Its subcellular location is the neuron projection. Stimulates smooth muscle contraction. Induces sighing by acting directly on the pre-Botzinger complex, a cluster of several thousand neurons in the ventrolateral medulla responsible for inspiration during respiratory activity. Contributes to the induction of sneezing following exposure to chemical irritants or allergens which causes release of NMB by nasal sensory neurons and activation of NMBR-expressing neurons in the sneeze-evoking region of the brainstem. These in turn activate neurons of the caudal ventral respiratory group, giving rise to the sneeze reflex. Contributes to induction of acute itch, possibly through activation of the NMBR receptor on dorsal root ganglion neurons. Increases expression of NMBR and steroidogenic mediators STAR, CYP11A1 and HSD3B1 in Leydig cells, induces secretion of testosterone by Leydig cells and also promotes Leydig cell proliferation. Plays a role in the innate immune response to influenza A virus infection by enhancing interferon alpha expression and reducing expression of IL6. Plays a role in CSF1-induced proliferation of osteoclast precursors by contributing to the positive regulation of the expression of the CSF1 receptor CSF1R. The protein is Neuromedin-B (Nmb) of Mus musculus (Mouse).